The sequence spans 499 residues: MVIKVPYVTAATTLFSFGLIFGFGHLRDSFRALLRLLFSSAAAADSPAGCNSKGYAPICVGKEDFYIRRFFRRVQDCFGRPIASKPDAWFDVVERYSTDSNKTLHCTTKTSKCLNLASFNYLGFAAADEYCTPRVIESLKKYSASTCSSRVDGGNTQLHIELEELVARFVRKPSAILLAMGYATNSAIIPALIGKGGLIISDSLNHNSIVSGARASGATIRVFEHNNPAHLEKLLREQISGGQPRTHRAWKKILVIVEGIYSMEGELCKLPEIISVCKKYKVYTYMDEAHSIGAVGKTGRGVCELLGVDPADVDIMMGTLSKSFGSSGGYIAASKEIIQHLKLTCPSHIYGTSMSPPAVQQVISAMKVILGEDGTDRGAKKIAQIRDNSNFFRSELQKMGFEVLGDNDSPVMPFMVYNPAKMPAFSRECLKQNVAVVPVGFPATPLLLGRIRICISASHSREDLIKGLEVISNVGDLVGIKYLPVEQEETTSVEKPKKL.

Residues 5-25 (VPYVTAATTLFSFGLIFGFGH) traverse the membrane as a helical segment. Lys-322 is modified (N6-(pyridoxal phosphate)lysine).

Belongs to the class-II pyridoxal-phosphate-dependent aminotransferase family. As to quaternary structure, heterodimer with LCB1. Component of the serine palmitoyltransferase (SPT) complex, composed of LCB1 and LCB2. It depends on pyridoxal 5'-phosphate as a cofactor.

Its subcellular location is the endoplasmic reticulum membrane. The catalysed reaction is L-serine + hexadecanoyl-CoA + H(+) = 3-oxosphinganine + CO2 + CoA. It functions in the pathway lipid metabolism; sphingolipid metabolism. Its function is as follows. Serine palmitoyltransferase (SPT). The heterodimer formed with LCB1 constitutes the catalytic core. In Oryza sativa subsp. japonica (Rice), this protein is Long chain base biosynthesis protein 2b.